The chain runs to 1578 residues: Pentafunctional AROM polypeptide (1578 aa).

Residues methionine 1–asparagine 384 are 3-dehydroquinate synthase. Residues aspartate 44–asparagine 46, glutamate 81–lysine 84, glycine 114–valine 116, and aspartate 119 each bind NAD(+). Arginine 130 lines the 7-phospho-2-dehydro-3-deoxy-D-arabino-heptonate pocket. Threonine 139–threonine 140 is a binding site for NAD(+). Positions 146 and 152 each coordinate 7-phospho-2-dehydro-3-deoxy-D-arabino-heptonate. Lysine 161 provides a ligand contact to NAD(+). Asparagine 162 contributes to the 7-phospho-2-dehydro-3-deoxy-D-arabino-heptonate binding site. Residues phenylalanine 179–threonine 182 and asparagine 190 each bind NAD(+). Glutamate 194 lines the Zn(2+) pocket. 7-phospho-2-dehydro-3-deoxy-D-arabino-heptonate-binding positions include glutamate 194 to lysine 197 and lysine 250. Residue glutamate 260 is the Proton acceptor; for 3-dehydroquinate synthase activity of the active site. 7-phospho-2-dehydro-3-deoxy-D-arabino-heptonate contacts are provided by residues arginine 264–asparagine 268 and histidine 271. Histidine 271 lines the Zn(2+) pocket. The active-site Proton acceptor; for 3-dehydroquinate synthase activity is histidine 275. 2 residues coordinate 7-phospho-2-dehydro-3-deoxy-D-arabino-heptonate: histidine 287 and lysine 356. Zn(2+) is bound at residue histidine 287. Residues valine 397–alanine 842 form an EPSP synthase region. The active-site For EPSP synthase activity is cysteine 824. The tract at residues threonine 864–serine 1055 is shikimate kinase. An ATP-binding site is contributed by glycine 871–threonine 878. The interval leucine 1056–glutamate 1276 is 3-dehydroquinase. Histidine 1179 acts as the Proton acceptor; for 3-dehydroquinate dehydratase activity in catalysis. The Schiff-base intermediate with substrate; for 3-dehydroquinate dehydratase activity role is filled by lysine 1207. Residues glutamine 1289–serine 1578 form a shikimate dehydrogenase region.

This sequence in the N-terminal section; belongs to the sugar phosphate cyclases superfamily. Dehydroquinate synthase family. In the 2nd section; belongs to the EPSP synthase family. It in the 3rd section; belongs to the shikimate kinase family. The protein in the 4th section; belongs to the type-I 3-dehydroquinase family. This sequence in the C-terminal section; belongs to the shikimate dehydrogenase family. In terms of assembly, homodimer. The cofactor is Zn(2+).

It is found in the cytoplasm. It catalyses the reaction 7-phospho-2-dehydro-3-deoxy-D-arabino-heptonate = 3-dehydroquinate + phosphate. The enzyme catalyses 3-dehydroquinate = 3-dehydroshikimate + H2O. The catalysed reaction is shikimate + NADP(+) = 3-dehydroshikimate + NADPH + H(+). It carries out the reaction shikimate + ATP = 3-phosphoshikimate + ADP + H(+). It catalyses the reaction 3-phosphoshikimate + phosphoenolpyruvate = 5-O-(1-carboxyvinyl)-3-phosphoshikimate + phosphate. Its pathway is metabolic intermediate biosynthesis; chorismate biosynthesis; chorismate from D-erythrose 4-phosphate and phosphoenolpyruvate: step 2/7. It functions in the pathway metabolic intermediate biosynthesis; chorismate biosynthesis; chorismate from D-erythrose 4-phosphate and phosphoenolpyruvate: step 3/7. It participates in metabolic intermediate biosynthesis; chorismate biosynthesis; chorismate from D-erythrose 4-phosphate and phosphoenolpyruvate: step 4/7. The protein operates within metabolic intermediate biosynthesis; chorismate biosynthesis; chorismate from D-erythrose 4-phosphate and phosphoenolpyruvate: step 5/7. Its pathway is metabolic intermediate biosynthesis; chorismate biosynthesis; chorismate from D-erythrose 4-phosphate and phosphoenolpyruvate: step 6/7. The AROM polypeptide catalyzes 5 consecutive enzymatic reactions in prechorismate polyaromatic amino acid biosynthesis. The polypeptide is Pentafunctional AROM polypeptide (Aspergillus flavus (strain ATCC 200026 / FGSC A1120 / IAM 13836 / NRRL 3357 / JCM 12722 / SRRC 167)).